We begin with the raw amino-acid sequence, 312 residues long: Olfactory receptor 1D5 (312 aa).

The Extracellular segment spans residues 1-25; the sequence is MDGDNQSENSQFLLLGISESPEQQQ. The N-linked (GlcNAc...) asparagine glycan is linked to asparagine 5. A helical membrane pass occupies residues 26–49; that stretch reads ILFWMFLSMYLVTVLGNVLIILAI. The Cytoplasmic portion of the chain corresponds to 50–57; the sequence is SSDSRLHT. A helical membrane pass occupies residues 58–79; it reads PMYFFLANLSFTDLFFVTNTIP. Residues 80-100 are Extracellular-facing; it reads KMLVNLQSQNKAISYAGCLTQ. Cysteine 97 and cysteine 189 are disulfide-bonded. The chain crosses the membrane as a helical span at residues 101–120; sequence LYFLVSLVTLDNLILAVMAY. Over 121–140 the chain is Cytoplasmic; it reads DRYVAICCPLHYVTAMSPGL. Residues 141 to 158 form a helical membrane-spanning segment; it reads CVLLLSLCWGLSVFYGLL. Over 159-196 the chain is Extracellular; that stretch reads LTLLLTRVTFCGPREIHYLFCDMYILLRLACSNTHIIH. A helical membrane pass occupies residues 197–220; the sequence is TVLVATGCFIFLTPLGFMTTSYVR. The Cytoplasmic portion of the chain corresponds to 221-237; the sequence is IVRTILQIPSASKKYKA. A helical membrane pass occupies residues 238-260; the sequence is FSTCASHLGVVSLFYGTLAMVYL. Topologically, residues 261–271 are extracellular; the sequence is QPLHTYSMKDS. A helical transmembrane segment spans residues 272-291; it reads VATVMYAVVTPMMNPFIHSL. Residues 292 to 312 are Cytoplasmic-facing; that stretch reads RNKDMHGALGRVLRRLFQRPK.

It belongs to the G-protein coupled receptor 1 family.

The protein resides in the cell membrane. Odorant receptor. The protein is Olfactory receptor 1D5 (OR1D5) of Pan troglodytes (Chimpanzee).